The sequence spans 403 residues: Esterase LipC (403 aa).

Catalysis depends on residues serine 237, aspartate 334, and histidine 367.

Belongs to the 'GDXG' lipolytic enzyme family.

It is found in the cell surface. The protein resides in the secreted. The protein localises to the cell wall. Its subcellular location is the capsule. It catalyses the reaction a fatty acid ester + H2O = an aliphatic alcohol + a fatty acid + H(+). The catalysed reaction is a butanoate ester + H2O = an aliphatic alcohol + butanoate + H(+). The enzyme catalyses a hexanoate ester + H2O = an aliphatic alcohol + hexanoate + H(+). It carries out the reaction an acetyl ester + H2O = an aliphatic alcohol + acetate + H(+). It catalyses the reaction an octanoate ester + H2O = an aliphatic alcohol + octanoate + H(+). The catalysed reaction is decanoate ester + H2O = decanoate + an aliphatic alcohol + H(+). In terms of biological role, esterase that can hydrolyze short-chain esters with the carbon chain containing 2 to 10 carbon atoms. Does not have lipase activity. Is highly immunogenic and elicits strong humoral immune responses in both HIV-negative (HIV-) and HIV-positive (HIV+) tuberculosis (TB) patients. Also elicits pro-inflammatory cytokine and chemokine responses from macrophages and pulmonary epithelial cells. May participate in the progression of active tuberculosis both by contributing to the utilization of lipid substrates for bacterial growth and replication, and by modulating immune responses. In Mycobacterium tuberculosis (strain ATCC 25618 / H37Rv), this protein is Esterase LipC.